The primary structure comprises 484 residues: Proline--tRNA ligase (484 aa).

The protein belongs to the class-II aminoacyl-tRNA synthetase family. ProS type 3 subfamily. As to quaternary structure, homodimer.

Its subcellular location is the cytoplasm. It carries out the reaction tRNA(Pro) + L-proline + ATP = L-prolyl-tRNA(Pro) + AMP + diphosphate. Its function is as follows. Catalyzes the attachment of proline to tRNA(Pro) in a two-step reaction: proline is first activated by ATP to form Pro-AMP and then transferred to the acceptor end of tRNA(Pro). This is Proline--tRNA ligase from Haloarcula marismortui (strain ATCC 43049 / DSM 3752 / JCM 8966 / VKM B-1809) (Halobacterium marismortui).